Consider the following 329-residue polypeptide: Sideroflexin-1.1 (329 aa).

5 consecutive transmembrane segments (helical) span residues 100–122 (MPGNMVTTGMLLGLYRTLPGVVF), 150–167 (LFVSYCCATSGAMTVALG), 178–198 (LAARLVPFAAIALANAINIPM), 232–254 (VTLSRIAMAMPYMVMTPIIMNRI), and 274–294 (IQTLIAGIGLYFTTPLCCALF).

Belongs to the sideroflexin family.

The protein resides in the mitochondrion inner membrane. The catalysed reaction is L-serine(in) = L-serine(out). The enzyme catalyses L-alanine(in) = L-alanine(out). It carries out the reaction L-cysteine(in) = L-cysteine(out). In terms of biological role, amino acid transporter importing serine, an essential substrate of the mitochondrial branch of the one-carbon pathway, into mitochondria. Mitochondrial serine is then converted to glycine and formate, which exits to the cytosol where it is used to generate the charged folates that serve as one-carbon donors. May also transport other amino acids including alanine and cysteine. In Caenorhabditis elegans, this protein is Sideroflexin-1.1.